We begin with the raw amino-acid sequence, 571 residues long: MRTSKYLFSTLKETPNDAQVVSHQLMLRAGMIRPMASGLYNWLPSGIRVLEKVKNIIREEMNKSGAIEVLMPVVQPAELWQESGRWEQYGLELLRFNDRGNRDFVLGPTHEEVITDLVRREVSSYKQLPLNLYQIQTKFRDEVRPRFGVMRSREFIMKDAYSFHTTKESLQATYDVMYQTYSNIFTRLGLDFRAVQADTGSIGGSASHEFQVLASSGEDDVVFSTESDYAANIELAEAIAVGERAQPGAAMQLVDTPNAKTIAELVEQFNLPIEKTVKTLIVKGATEEQPLVALIIRGDHDLNEIKAEKLPEVASPFEFADEADIKAKIGAGVGSLGPVNLNIPVIIDRSVALMSDFGAGANIDGKHYFNINWERDVALPKIADLRNVVEGDPSPDGKGTLLIKRGIEVGHIFQLGQKYSEAMNATVQGEDGKPLVMTMGCYGIGVTRVVASAIEQHHDERGIIWPSDAIAPFTVAIVPMNMHKSESVQAYAEELYQTLLAQGVEVIFDDRKERPGVMFADMELIGVPHMVIIGEKNLENGEIEYKNRRTSEKQMIAKDQLLDFLKANVNV.

The protein belongs to the class-II aminoacyl-tRNA synthetase family. ProS type 1 subfamily. In terms of assembly, homodimer.

The protein resides in the cytoplasm. The enzyme catalyses tRNA(Pro) + L-proline + ATP = L-prolyl-tRNA(Pro) + AMP + diphosphate. Functionally, catalyzes the attachment of proline to tRNA(Pro) in a two-step reaction: proline is first activated by ATP to form Pro-AMP and then transferred to the acceptor end of tRNA(Pro). As ProRS can inadvertently accommodate and process non-cognate amino acids such as alanine and cysteine, to avoid such errors it has two additional distinct editing activities against alanine. One activity is designated as 'pretransfer' editing and involves the tRNA(Pro)-independent hydrolysis of activated Ala-AMP. The other activity is designated 'posttransfer' editing and involves deacylation of mischarged Ala-tRNA(Pro). The misacylated Cys-tRNA(Pro) is not edited by ProRS. This is Proline--tRNA ligase from Mannheimia succiniciproducens (strain KCTC 0769BP / MBEL55E).